The chain runs to 193 residues: Ion-translocating oxidoreductase complex subunit A (193 aa).

6 helical membrane-spanning segments follow: residues 4–24 (LALI…KFLG), 38–58 (AMGM…CSYL), 65–85 (APLG…AVVV), 102–122 (VLGI…VALL), 134–154 (AVYG…FAAL), and 171–191 (SVAL…AGLV).

The protein belongs to the NqrDE/RnfAE family. As to quaternary structure, the complex is composed of six subunits: RnfA, RnfB, RnfC, RnfD, RnfE and RnfG.

The protein localises to the cell inner membrane. Its function is as follows. Part of a membrane-bound complex that couples electron transfer with translocation of ions across the membrane. This is Ion-translocating oxidoreductase complex subunit A from Alkalilimnicola ehrlichii (strain ATCC BAA-1101 / DSM 17681 / MLHE-1).